The chain runs to 25 residues: Chrysophsin-2 (25 aa).

Histidine amide is present on His25.

As to expression, gill.

It localises to the secreted. In terms of biological role, has antibacterial activity against Gram-positive bacteria B.subtilis ATCC 6633, L.garvieae ATCC 49156 and S.iniae F-8502, and Gram-negative bacteria E.coli WT-2, V.anguillarum ATCC 19264, V.penaeicida KHA, V.harveyi ATCC 14126, V.vulnificus ATCC 33148 and A.salmonicida NCMB 1102. Has hemolytic activity against human red blood cells. Seems to disrupt the membranes by adopting an alpha helical conformation. May play a significant role in innate host defense. This Pagrus major (Red sea bream) protein is Chrysophsin-2.